A 137-amino-acid chain; its full sequence is Profilin-3 (137 aa).

It belongs to the profilin family. As to quaternary structure, interacts with ACTRT3. In terms of tissue distribution, testis specific.

It localises to the cytoplasm. The protein localises to the cytoskeleton. It is found in the nucleus. Binds to actin and affects the structure of the cytoskeleton. Slightly reduces actin polymerization. Binds to poly-L-proline, phosphatidylinositol 3-phosphate (PtdIns(3)P), phosphatidylinositol 4,5-bisphosphate (PtdIns(4,5)P2) and phosphatidylinositol 4-phosphate (PtdIns(4)P). May be involved in spermatogenesis. This Homo sapiens (Human) protein is Profilin-3 (PFN3).